We begin with the raw amino-acid sequence, 72 residues long: Prokaryotic ubiquitin-like protein Pup (72 aa).

Over residues 1-10 (MATRDSGGGQ) the composition is skewed to gly residues. The tract at residues 1–41 (MATRDSGGGQQHTNRHADEVEEVAAEGNDASDLKERHEKLS) is disordered. Positions 21-61 (EEVAAEGNDASDLKERHEKLSEDVDSLLDEIDDVLEENAEE) form a coiled coil. An ARC ATPase binding region spans residues 28 to 66 (NDASDLKERHEKLSEDVDSLLDEIDDVLEENAEEFVKGY). Residues 31–41 (SDLKERHEKLS) are compositionally biased toward basic and acidic residues. Glu72 is covalently cross-linked (Isoglutamyl lysine isopeptide (Glu-Lys) (interchain with K-? in acceptor proteins)).

Belongs to the prokaryotic ubiquitin-like protein family. Strongly interacts with the proteasome-associated ATPase ARC through a hydrophobic interface; the interacting region of Pup lies in its C-terminal half. There is one Pup binding site per ARC hexamer ring.

It participates in protein degradation; proteasomal Pup-dependent pathway. Protein modifier that is covalently attached to lysine residues of substrate proteins, thereby targeting them for proteasomal degradation. The tagging system is termed pupylation. This is Prokaryotic ubiquitin-like protein Pup from Frankia alni (strain DSM 45986 / CECT 9034 / ACN14a).